We begin with the raw amino-acid sequence, 357 residues long: UDP-N-acetylglucosamine--N-acetylmuramyl-(pentapeptide) pyrophosphoryl-undecaprenol N-acetylglucosamine transferase (357 aa).

UDP-N-acetyl-alpha-D-glucosamine contacts are provided by residues Thr14–Gly16, Asn128, Arg169, Ser193, Ile248, and Gln292.

Belongs to the glycosyltransferase 28 family. MurG subfamily.

It localises to the cell inner membrane. The enzyme catalyses di-trans,octa-cis-undecaprenyl diphospho-N-acetyl-alpha-D-muramoyl-L-alanyl-D-glutamyl-meso-2,6-diaminopimeloyl-D-alanyl-D-alanine + UDP-N-acetyl-alpha-D-glucosamine = di-trans,octa-cis-undecaprenyl diphospho-[N-acetyl-alpha-D-glucosaminyl-(1-&gt;4)]-N-acetyl-alpha-D-muramoyl-L-alanyl-D-glutamyl-meso-2,6-diaminopimeloyl-D-alanyl-D-alanine + UDP + H(+). The protein operates within cell wall biogenesis; peptidoglycan biosynthesis. Functionally, cell wall formation. Catalyzes the transfer of a GlcNAc subunit on undecaprenyl-pyrophosphoryl-MurNAc-pentapeptide (lipid intermediate I) to form undecaprenyl-pyrophosphoryl-MurNAc-(pentapeptide)GlcNAc (lipid intermediate II). The sequence is that of UDP-N-acetylglucosamine--N-acetylmuramyl-(pentapeptide) pyrophosphoryl-undecaprenol N-acetylglucosamine transferase from Bdellovibrio bacteriovorus (strain ATCC 15356 / DSM 50701 / NCIMB 9529 / HD100).